The chain runs to 86 residues: Colicin-E2 immunity protein (86 aa).

This sequence belongs to the colicins ColE2/ColE8/ColE9 and pyocins S1/S2 family.

This protein is able to protect a cell, which harbors the plasmid ColE2 encoding colicin E2, against colicin E2. The sequence is that of Colicin-E2 immunity protein (imm) from Escherichia coli.